A 359-amino-acid chain; its full sequence is MILNSSIEDGIKRIQDDCPKAGRHNYIFVMIPTLYSIIFVVGIFGNSLVVIVIYFYMKLKTVASVFLLNLALADLCFLLTLPLWAVYTAMEYQWPFGNHLCKIASASVSFNLYASVFLLTCLSIDRYLAIVHPMKSRLRRTMLVAKVTCIIIWLMAGLASLPAVIHRNVYFIENTNITVCAFHYESQNSTLPIGLGLTKNILGFVFPFVIILTSYTLIWKALKKAYKIQKNTPRNDDIFRIIMAIVLFFFFSWVPHQIFSFLDVLIQLGVIHDCEIADVVDTAMPITICIAYFNNCLNPLFYGFLGKKFKRYFLQLLKYIPPKARSHAGLSTKMSTLSYRPSDNMSSSARKSAYCFEVE.

Over 1-25 (MILNSSIEDGIKRIQDDCPKAGRHN) the chain is Extracellular. The N-linked (GlcNAc...) asparagine glycan is linked to N4. Residues Q15 and D17 each coordinate angiotensin II. 2 disulfide bridges follow: C18-C274 and C101-C180. Residues 26-55 (YIFVMIPTLYSIIFVVGIFGNSLVVIVIYF) form a helical membrane-spanning segment. Over 56-61 (YMKLKT) the chain is Cytoplasmic. The helical transmembrane segment at 62-89 (VASVFLLNLALADLCFLLTLPLWAVYTA) threads the bilayer. Residues 90 to 98 (MEYQWPFGN) are Extracellular-facing. Residues 99–125 (HLCKIASASVSFNLYASVFLLTCLSID) form a helical membrane-spanning segment. Topologically, residues 126–141 (RYLAIVHPMKSRLRRT) are cytoplasmic. The chain crosses the membrane as a helical span at residues 142–165 (MLVAKVTCIIIWLMAGLASLPAVI). Topologically, residues 166-190 (HRNVYFIENTNITVCAFHYESQNST) are extracellular. R167 is a binding site for angiotensin II. N-linked (GlcNAc...) asparagine glycosylation is present at N176. 3 residues coordinate angiotensin II: F182, H183, and Y184. N188 is a glycosylation site (N-linked (GlcNAc...) asparagine). Residues 191 to 216 (LPIGLGLTKNILGFVFPFVIILTSYT) traverse the membrane as a helical segment. Position 199 (K199) interacts with angiotensin II. The Cytoplasmic portion of the chain corresponds to 217–239 (LIWKALKKAYKIQKNTPRNDDIF). A helical transmembrane segment spans residues 240 to 268 (RIIMAIVLFFFFSWVPHQIFSFLDVLIQL). The Extracellular segment spans residues 269-278 (GVIHDCEIAD). The helical transmembrane segment at 279–304 (VVDTAMPITICIAYFNNCLNPLFYGF) threads the bilayer. At 305–359 (LGKKFKRYFLQLLKYIPPKARSHAGLSTKMSTLSYRPSDNMSSSARKSAYCFEVE) the chain is on the cytoplasmic side. The S-palmitoyl cysteine moiety is linked to residue C355.

Belongs to the G-protein coupled receptor 1 family. Interacts with MAS1. Interacts with ARRB1. Interacts with FLNA (via filamin repeat 21); increases PKA-mediated phosphorylation of FLNA. Post-translationally, C-terminal Ser or Thr residues may be phosphorylated.

The protein localises to the cell membrane. Its function is as follows. Receptor for angiotensin II, a vasoconstricting peptide, which acts as a key regulator of blood pressure and sodium retention by the kidney. The activated receptor in turn couples to G-alpha proteins G(q) (GNAQ, GNA11, GNA14 or GNA15) and thus activates phospholipase C and increases the cytosolic Ca(2+) concentrations, which in turn triggers cellular responses such as stimulation of protein kinase C. The polypeptide is Type-1 angiotensin II receptor B (Agtr1b) (Mus musculus (Mouse)).